Here is a 360-residue protein sequence, read N- to C-terminus: Peptide chain release factor 1 (360 aa).

The residue at position 235 (Gln-235) is an N5-methylglutamine. The segment covering 280–293 (DKQSHEQQAKEAAT) has biased composition (basic and acidic residues). Residues 280 to 300 (DKQSHEQQAKEAATRKSLIGS) form a disordered region.

It belongs to the prokaryotic/mitochondrial release factor family. In terms of processing, methylated by PrmC. Methylation increases the termination efficiency of RF1.

It localises to the cytoplasm. Its function is as follows. Peptide chain release factor 1 directs the termination of translation in response to the peptide chain termination codons UAG and UAA. In Paraburkholderia xenovorans (strain LB400), this protein is Peptide chain release factor 1.